Consider the following 805-residue polypeptide: Cell division cycle 5-related protein (805 aa).

HTH myb-type domains lie at 1-58 and 59-108; these read MPRI…DPSI and KKTE…DQAQ. 2 consecutive DNA-binding regions (H-T-H motif) follow at residues 31 to 54 and 82 to 104; these read WSRI…YEWL and WRTI…EYLL. Over residues 108–127 the composition is skewed to basic and acidic residues; that stretch reads QAKEGDKDEGDDPRKLRPGE. Disordered stretches follow at residues 108–143, 246–293, 409–442, and 530–556; these read QAKE…DPID, HLEG…HVKK, LSTP…QRSV, and LERR…VLRP. Positions 142–193 form a coiled coil; that stretch reads IDMDEDELEMLSEARARLANTQGKKAKRKAREKQLEEARRLAALQKRRELRA. Residues 246 to 274 show a composition bias toward basic and acidic residues; the sequence is HLEGKMRDEIEQQERKKDKERMKKKKESD. Coiled-coil stretches lie at residues 511 to 542 and 678 to 804; these read EDAA…VQRE and YTRA…SKLQ.

Belongs to the CEF1 family. As to quaternary structure, component of the precatalytic, catalytic and postcatalytic spliceosome complexes.

Its subcellular location is the nucleus. The protein resides in the cytoplasm. Functionally, DNA-binding protein involved in cell cycle control. May act as a transcription activator. Plays a role in pre-mRNA splicing as core component of precatalytic, catalytic and postcatalytic spliceosomal complexes. May also play a role in the response to DNA damage (DDR). The polypeptide is Cell division cycle 5-related protein (cdc5l) (Nematostella vectensis (Starlet sea anemone)).